A 97-amino-acid chain; its full sequence is Secreted RxLR effector protein BLR05 (97 aa).

Positions 1 to 21 (MGPQHLLALVVVSILVAAGNA) are cleaved as a signal peptide. Positions 32 to 60 (RALRPSVIADQEHAVHAIPATNFISKDED) match the RxLR-dEER motif. Residues 69-89 (IEIIRIAIFSLLVVGVFAIMA) traverse the membrane as a helical segment.

Belongs to the RxLR effector family. In terms of assembly, interacts with host transcription factor NAC069.

The protein resides in the secreted. It is found in the host endoplasmic reticulum membrane. Secreted effector that inhibits stress-induced relocalization of the transcription factor NAC069 to the nucleus, thus affecting its broad role in abiotic and biotic stress responses. The chain is Secreted RxLR effector protein BLR05 from Bremia lactucae (Lettuce downy mildew).